A 341-amino-acid chain; its full sequence is Glucokinase (341 aa).

Residue 18–23 (GDIGGT) participates in ATP binding.

The protein belongs to the bacterial glucokinase family.

The protein resides in the cytoplasm. It carries out the reaction D-glucose + ATP = D-glucose 6-phosphate + ADP + H(+). In Rhizobium leguminosarum bv. trifolii (strain WSM2304), this protein is Glucokinase.